The following is a 204-amino-acid chain: N-(5'-phosphoribosyl)anthranilate isomerase (204 aa).

The protein belongs to the TrpF family.

It catalyses the reaction N-(5-phospho-beta-D-ribosyl)anthranilate = 1-(2-carboxyphenylamino)-1-deoxy-D-ribulose 5-phosphate. Its pathway is amino-acid biosynthesis; L-tryptophan biosynthesis; L-tryptophan from chorismate: step 3/5. This Bacillus thuringiensis (strain Al Hakam) protein is N-(5'-phosphoribosyl)anthranilate isomerase.